Here is a 325-residue protein sequence, read N- to C-terminus: NADH-quinone oxidoreductase subunit H (325 aa).

8 consecutive transmembrane segments (helical) span residues I11–F31, V81–V101, I114–G134, L154–F174, V186–V206, F237–F257, L265–I285, and I304–A324.

It belongs to the complex I subunit 1 family. As to quaternary structure, NDH-1 is composed of 13 different subunits. Subunits NuoA, H, J, K, L, M, N constitute the membrane sector of the complex.

It is found in the cell inner membrane. The catalysed reaction is a quinone + NADH + 5 H(+)(in) = a quinol + NAD(+) + 4 H(+)(out). Its function is as follows. NDH-1 shuttles electrons from NADH, via FMN and iron-sulfur (Fe-S) centers, to quinones in the respiratory chain. The immediate electron acceptor for the enzyme in this species is believed to be ubiquinone. Couples the redox reaction to proton translocation (for every two electrons transferred, four hydrogen ions are translocated across the cytoplasmic membrane), and thus conserves the redox energy in a proton gradient. This subunit may bind ubiquinone. The polypeptide is NADH-quinone oxidoreductase subunit H (Shigella flexneri serotype 5b (strain 8401)).